A 510-amino-acid chain; its full sequence is Histidine ammonia-lyase (510 aa).

The segment at residues 143-145 is a cross-link (5-imidazolinone (Ala-Gly)); sequence ASG. Ser-144 is modified (2,3-didehydroalanine (Ser)).

The protein belongs to the PAL/histidase family. Contains an active site 4-methylidene-imidazol-5-one (MIO), which is formed autocatalytically by cyclization and dehydration of residues Ala-Ser-Gly.

It localises to the cytoplasm. The enzyme catalyses L-histidine = trans-urocanate + NH4(+). Its pathway is amino-acid degradation; L-histidine degradation into L-glutamate; N-formimidoyl-L-glutamate from L-histidine: step 1/3. This chain is Histidine ammonia-lyase, found in Shewanella woodyi (strain ATCC 51908 / MS32).